Here is a 264-residue protein sequence, read N- to C-terminus: Protein hob3 (264 aa).

The 221-residue stretch at 17-237 folds into the BAR domain; it reads VMMKTGHVER…FDNSVREDYS (221 aa). Coiled-coil stretches lie at residues 25-65 and 165-187; these read ERTV…AMTA and RTEK…LVSE.

The protein resides in the cytoplasm. It is found in the cytoskeleton. Functionally, involved in cytokinesis and septation where it has a role in the localization of F-actin. In Schizosaccharomyces pombe (strain 972 / ATCC 24843) (Fission yeast), this protein is Protein hob3 (hob3).